Consider the following 1316-residue polypeptide: DNA-directed RNA polymerase subunit beta' (1316 aa).

Residues Cys-60, Cys-62, Cys-75, and Cys-78 each contribute to the Zn(2+) site. Residues Asp-535, Asp-537, and Asp-539 each coordinate Mg(2+). The Zn(2+) site is built by Cys-891, Cys-968, Cys-975, and Cys-978.

Belongs to the RNA polymerase beta' chain family. The RNAP catalytic core consists of 2 alpha, 1 beta, 1 beta' and 1 omega subunit. When a sigma factor is associated with the core the holoenzyme is formed, which can initiate transcription. The cofactor is Mg(2+). It depends on Zn(2+) as a cofactor.

The catalysed reaction is RNA(n) + a ribonucleoside 5'-triphosphate = RNA(n+1) + diphosphate. DNA-dependent RNA polymerase catalyzes the transcription of DNA into RNA using the four ribonucleoside triphosphates as substrates. The sequence is that of DNA-directed RNA polymerase subunit beta' from Mycobacterium tuberculosis (strain ATCC 25177 / H37Ra).